The following is a 156-amino-acid chain: Bacterial ferritin (156 aa).

The region spanning 1–146 (MKGKPAVLAQ…KQLGLIEKIG (146 aa)) is the Ferritin-like diiron domain. Positions 18, 51, 54, 94, 128, and 131 each coordinate Fe cation.

It belongs to the bacterioferritin family. The bacterioferritin (BFR) complex is formed of 24 subunits (BfrA and BfrB) of unknown stoichiometry. The BFR is arranged as 12 dimers that are packed together to form an approximately spherical molecule with a central cavity, in which large amounts of iron can be deposited.

It localises to the cytoplasm. The enzyme catalyses 4 Fe(2+) + O2 + 4 H(+) = 4 Fe(3+) + 2 H2O. The catalysed reaction is Fe(2+)(in) = Fe(2+)(out). Its function is as follows. Part of the iron-storage bacterioferritin (BFR) complex which stores about 50% of intracellular iron. Iron-storage protein, whose ferroxidase center binds Fe(2+), oxidizes it using dioxygen to Fe(3+), and participates in the subsequent Fe(3+) oxide mineral core formation within the central cavity of the BFR protein shell. BFR rapidly binds iron in labeling experiments in vivo during iron-limiting conditions. This chain is Bacterial ferritin, found in Synechocystis sp. (strain ATCC 27184 / PCC 6803 / Kazusa).